Here is a 372-residue protein sequence, read N- to C-terminus: Citrate/2-methylcitrate synthase (372 aa).

A substrate-binding site is contributed by H188. Residue H223 is part of the active site. 256–260 (KIMGF) lines the CoA pocket. The active site involves H262. Residue R272 participates in substrate binding. The active site involves D314. 2 residues coordinate substrate: R339 and R358.

It belongs to the citrate synthase family.

It catalyses the reaction propanoyl-CoA + oxaloacetate + H2O = 2-methylcitrate + CoA + H(+). It carries out the reaction oxaloacetate + acetyl-CoA + H2O = citrate + CoA + H(+). The protein operates within carbohydrate metabolism; tricarboxylic acid cycle; isocitrate from oxaloacetate: step 1/2. Functionally, involved in both the tricarboxylic acid (TCA) and methylcitric acid cycles. Has both 2-methylcitrate synthase and citrate synthase activities. Catalyzes the condensation of propionyl-CoA and oxaloacetate to yield 2-methylcitrate (2-MC) and CoA, and the condensation of acetyl-CoA and oxaloacetate to yield citrate and CoA. Has 2.3-fold higher activity as a 2-methylcitrate synthase. Catalyzes the formation of either (2S,3R)- or (2R,3S)-2-methylcitrate. The chain is Citrate/2-methylcitrate synthase from Bacillus subtilis (strain 168).